The chain runs to 191 residues: Phosphopantetheine adenylyltransferase (191 aa).

Substrate is bound at residue S8. Residues 8 to 9 (SF) and H16 contribute to the ATP site. Positions 40, 72, and 86 each coordinate substrate. ATP-binding positions include 87 to 89 (GLR), E97, and 122 to 128 (YSFLSSS).

It belongs to the bacterial CoaD family. As to quaternary structure, homohexamer. Requires Mg(2+) as cofactor.

It is found in the cytoplasm. The catalysed reaction is (R)-4'-phosphopantetheine + ATP + H(+) = 3'-dephospho-CoA + diphosphate. It functions in the pathway cofactor biosynthesis; coenzyme A biosynthesis; CoA from (R)-pantothenate: step 4/5. Its function is as follows. Reversibly transfers an adenylyl group from ATP to 4'-phosphopantetheine, yielding dephospho-CoA (dPCoA) and pyrophosphate. In Nostoc sp. (strain PCC 7120 / SAG 25.82 / UTEX 2576), this protein is Phosphopantetheine adenylyltransferase.